Consider the following 132-residue polypeptide: Histone H2B.9 (132 aa).

Positions 1 to 11 (MAPKAEKKPAE) are enriched in basic and acidic residues. The tract at residues 1 to 41 (MAPKAEKKPAEKAPAPKAEKKIAKEGGTSEIVKKKKKTKKS) is disordered. Ala2 bears the N,N,N-trimethylalanine; alternate mark. Position 2 is a n,N-dimethylalanine; alternate (Ala2). Position 2 is an N-methylalanine; alternate (Ala2). An N6-methyllysine modification is found at Lys4. N6-acetyllysine is present on residues Lys7, Lys12, Lys20, and Lys21. A Glycyl lysine isopeptide (Lys-Gly) (interchain with G-Cter in ubiquitin) cross-link involves residue Lys128.

Belongs to the histone H2B family. In terms of assembly, the nucleosome is a histone octamer containing two molecules each of H2A, H2B, H3 and H4 assembled in one H3-H4 heterotetramer and two H2A-H2B heterodimers. The octamer wraps approximately 147 bp of DNA. In terms of processing, can be acetylated to form H2BK6ac, H2BK33ac and H2BK34ac. Post-translationally, monoubiquitinated by BRE1 to form H2BK143ub1 and deubiquitinated by UBP26. Required for heterochromatic histone H3 di- and trimethylation at H3K4me. May give a specific tag for epigenetic transcriptional activation.

It is found in the nucleus. It localises to the chromosome. Core component of nucleosome. Nucleosomes wrap and compact DNA into chromatin, limiting DNA accessibility to the cellular machineries which require DNA as a template. Histones thereby play a central role in transcription regulation, DNA repair, DNA replication and chromosomal stability. DNA accessibility is regulated via a complex set of post-translational modifications of histones, also called histone code, and nucleosome remodeling. The polypeptide is Histone H2B.9 (Arabidopsis thaliana (Mouse-ear cress)).